We begin with the raw amino-acid sequence, 95 residues long: Citrate lyase acyl carrier protein (95 aa).

S14 is subject to O-(phosphoribosyl dephospho-coenzyme A)serine.

The protein belongs to the CitD family. Oligomer with a subunit composition of (alpha,beta,gamma)6.

It localises to the cytoplasm. Functionally, covalent carrier of the coenzyme of citrate lyase. The polypeptide is Citrate lyase acyl carrier protein (Haemophilus influenzae (strain PittGG)).